Consider the following 584-residue polypeptide: Ubiquitin-like-specific protease 1D (584 aa).

Disordered stretches follow at residues Asp-28–Leu-64 and Asp-99–Glu-323. Basic and acidic residues predominate over residues Asp-99–Ser-120. Residues Lys-121–Val-132 are compositionally biased toward low complexity. Composition is skewed to basic and acidic residues over residues Asp-142–Ser-165 and Pro-176–Glu-196. The segment covering Arg-197–Val-207 has biased composition (basic residues). Residues Gly-221–Met-253 show a composition bias toward basic and acidic residues. Residues Ile-261–Asp-274 are compositionally biased toward acidic residues. Residues Thr-275–Trp-286 are compositionally biased toward basic and acidic residues. Catalysis depends on residues His-438, Asp-461, and Cys-525.

Belongs to the peptidase C48 family.

The protein resides in the nucleus speckle. Its function is as follows. Protease that catalyzes two essential functions in the SUMO pathway: processing of full-length SUMOs to their mature forms and deconjugation of SUMO from targeted proteins. Cleaves precursors of SUM1 and SUM2, but not of SUM3 or SUM5. Able to release SUM1 and SUM2 from conjugates, but unable to cleave SUM3. Protease activity mainly directed at deconjugating SUM1 and SUM2 from their target proteins. Regulates salt stress responses and flowering time. Redundant with ULP1C. In Arabidopsis thaliana (Mouse-ear cress), this protein is Ubiquitin-like-specific protease 1D (ULP1D).